The primary structure comprises 233 residues: MVEVVSVREHDRWRGVYVVELEDGSLRIATKNLVPGQRVYGERIFRYNGEEYREWNAYRSKLAAALLKGLIELPVKEGDRILYLGIASGTTASHMSDIIGPRGRIYGVEFAPRVMRDLLTVVRDRRNIFPILGDARFPEKYRHLVEGVDGLYADVAQPEQAAIVVRNARFFLRDGGYMLMAIKARSIDVTTEPSEVYKREIKTLMDGGLEIKDVVHLDPFDRDHAMIYAVMRR.

Residues 90 to 91 (TT), 109 to 110 (EF), 134 to 135 (DA), and 154 to 157 (DVAQ) each bind S-adenosyl-L-methionine.

The protein belongs to the methyltransferase superfamily. Fibrillarin family. In terms of assembly, interacts with nop5. Component of box C/D small ribonucleoprotein (sRNP) particles that contain rpl7ae, FlpA and nop5, plus a guide RNA.

In terms of biological role, involved in pre-rRNA and tRNA processing. Utilizes the methyl donor S-adenosyl-L-methionine to catalyze the site-specific 2'-hydroxyl methylation of ribose moieties in rRNA and tRNA. Site specificity is provided by a guide RNA that base pairs with the substrate. Methylation occurs at a characteristic distance from the sequence involved in base pairing with the guide RNA. The polypeptide is Fibrillarin-like rRNA/tRNA 2'-O-methyltransferase (Aeropyrum pernix (strain ATCC 700893 / DSM 11879 / JCM 9820 / NBRC 100138 / K1)).